Here is a 201-residue protein sequence, read N- to C-terminus: Large ribosomal subunit protein uL4 (201 aa).

The disordered stretch occupies residues 44–73 (RAQKSRAEVKASRKKPWRQKGTGRARAGSV). A compositionally biased stretch (basic residues) spans 55–66 (SRKKPWRQKGTG).

This sequence belongs to the universal ribosomal protein uL4 family. As to quaternary structure, part of the 50S ribosomal subunit.

Its function is as follows. One of the primary rRNA binding proteins, this protein initially binds near the 5'-end of the 23S rRNA. It is important during the early stages of 50S assembly. It makes multiple contacts with different domains of the 23S rRNA in the assembled 50S subunit and ribosome. In terms of biological role, forms part of the polypeptide exit tunnel. This Hamiltonella defensa subsp. Acyrthosiphon pisum (strain 5AT) protein is Large ribosomal subunit protein uL4.